The chain runs to 103 residues: MMNNMKLLIIAVMIISAALLPALVVGSRPVKCDNCMDGGEKEEIMKMSSGVDVSHRILQAKRFIDYEALKKNLPAKPDGKPDKPDNKYRRGCSAATGCYRFTN.

An N-terminal signal peptide occupies residues 1–32 (MMNNMKLLIIAVMIISAALLPALVVGSRPVKC). A propeptide spans 33 to 58 (DNCMDGGEKEEIMKMSSGVDVSHRIL) (removed in mature form). A disulfide bridge connects residues cysteine 92 and cysteine 98.

The protein belongs to the plant rapid alkalinization factor (RALF) family. In terms of processing, proteolytically cleaved, probably by S1P, a subtilisin-like serine protease (subtilase).

The protein localises to the secreted. Cell signaling peptide that may regulate plant stress, growth, and development. Mediates a rapid alkalinization of extracellular space by mediating a transient increase in the cytoplasmic Ca(2+) concentration leading to a calcium-dependent signaling events through a cell surface receptor and a concomitant activation of some intracellular mitogen-activated protein kinases. This is Protein RALF-like 18 (RALFL18) from Arabidopsis thaliana (Mouse-ear cress).